A 340-amino-acid chain; its full sequence is Glycerol-3-phosphate dehydrogenase [NAD(P)+] (340 aa).

Residues serine 14, phenylalanine 15, arginine 35, and lysine 108 each contribute to the NADPH site. Residues lysine 108 and glycine 136 each coordinate sn-glycerol 3-phosphate. Alanine 140 lines the NADPH pocket. 5 residues coordinate sn-glycerol 3-phosphate: lysine 191, aspartate 244, serine 254, arginine 255, and asparagine 256. Lysine 191 serves as the catalytic Proton acceptor. Arginine 255 is a binding site for NADPH. An NADPH-binding site is contributed by glutamate 281.

Belongs to the NAD-dependent glycerol-3-phosphate dehydrogenase family.

It localises to the cytoplasm. It catalyses the reaction sn-glycerol 3-phosphate + NAD(+) = dihydroxyacetone phosphate + NADH + H(+). The enzyme catalyses sn-glycerol 3-phosphate + NADP(+) = dihydroxyacetone phosphate + NADPH + H(+). Its pathway is membrane lipid metabolism; glycerophospholipid metabolism. Catalyzes the reduction of the glycolytic intermediate dihydroxyacetone phosphate (DHAP) to sn-glycerol 3-phosphate (G3P), the key precursor for phospholipid synthesis. This chain is Glycerol-3-phosphate dehydrogenase [NAD(P)+], found in Pseudomonas paraeruginosa (strain DSM 24068 / PA7) (Pseudomonas aeruginosa (strain PA7)).